A 352-amino-acid chain; its full sequence is 3-isopropylmalate dehydrogenase (352 aa).

NAD(+) is bound at residue 76–89 (GYKWENLPHDKKPE). R96, R106, R134, and D220 together coordinate substrate. 3 residues coordinate Mg(2+): D220, D244, and D248. NAD(+) is bound at residue 277-289 (GSAPDIAGQNKAN).

Belongs to the isocitrate and isopropylmalate dehydrogenases family. LeuB type 1 subfamily. Homodimer. The cofactor is Mg(2+). Mn(2+) serves as cofactor.

The protein localises to the cytoplasm. The catalysed reaction is (2R,3S)-3-isopropylmalate + NAD(+) = 4-methyl-2-oxopentanoate + CO2 + NADH. It participates in amino-acid biosynthesis; L-leucine biosynthesis; L-leucine from 3-methyl-2-oxobutanoate: step 3/4. Functionally, catalyzes the oxidation of 3-carboxy-2-hydroxy-4-methylpentanoate (3-isopropylmalate) to 3-carboxy-4-methyl-2-oxopentanoate. The product decarboxylates to 4-methyl-2 oxopentanoate. The polypeptide is 3-isopropylmalate dehydrogenase (Chlorobaculum tepidum (strain ATCC 49652 / DSM 12025 / NBRC 103806 / TLS) (Chlorobium tepidum)).